The chain runs to 245 residues: 1-(5-phosphoribosyl)-5-[(5-phosphoribosylamino)methylideneamino] imidazole-4-carboxamide isomerase (245 aa).

Asp11 (proton acceptor) is an active-site residue. Residue Asp132 is the Proton donor of the active site.

It belongs to the HisA/HisF family.

It is found in the cytoplasm. It carries out the reaction 1-(5-phospho-beta-D-ribosyl)-5-[(5-phospho-beta-D-ribosylamino)methylideneamino]imidazole-4-carboxamide = 5-[(5-phospho-1-deoxy-D-ribulos-1-ylimino)methylamino]-1-(5-phospho-beta-D-ribosyl)imidazole-4-carboxamide. It participates in amino-acid biosynthesis; L-histidine biosynthesis; L-histidine from 5-phospho-alpha-D-ribose 1-diphosphate: step 4/9. This Geobacillus kaustophilus (strain HTA426) protein is 1-(5-phosphoribosyl)-5-[(5-phosphoribosylamino)methylideneamino] imidazole-4-carboxamide isomerase.